Consider the following 211-residue polypeptide: ATP phosphoribosyltransferase (211 aa).

Belongs to the ATP phosphoribosyltransferase family. Short subfamily. As to quaternary structure, heteromultimer composed of HisG and HisZ subunits.

The protein localises to the cytoplasm. The catalysed reaction is 1-(5-phospho-beta-D-ribosyl)-ATP + diphosphate = 5-phospho-alpha-D-ribose 1-diphosphate + ATP. Its pathway is amino-acid biosynthesis; L-histidine biosynthesis; L-histidine from 5-phospho-alpha-D-ribose 1-diphosphate: step 1/9. In terms of biological role, catalyzes the condensation of ATP and 5-phosphoribose 1-diphosphate to form N'-(5'-phosphoribosyl)-ATP (PR-ATP). Has a crucial role in the pathway because the rate of histidine biosynthesis seems to be controlled primarily by regulation of HisG enzymatic activity. This chain is ATP phosphoribosyltransferase, found in Bacillus thuringiensis subsp. konkukian (strain 97-27).